The chain runs to 610 residues: Elongation factor 4 (610 aa).

The tr-type G domain maps to 11 to 193 (ENIRNFSIIA…QIVEKVPAPS (183 aa)). Residues 23–28 (DHGKST) and 140–143 (NKID) contribute to the GTP site.

It belongs to the TRAFAC class translation factor GTPase superfamily. Classic translation factor GTPase family. LepA subfamily.

Its subcellular location is the cell membrane. The catalysed reaction is GTP + H2O = GDP + phosphate + H(+). Required for accurate and efficient protein synthesis under certain stress conditions. May act as a fidelity factor of the translation reaction, by catalyzing a one-codon backward translocation of tRNAs on improperly translocated ribosomes. Back-translocation proceeds from a post-translocation (POST) complex to a pre-translocation (PRE) complex, thus giving elongation factor G a second chance to translocate the tRNAs correctly. Binds to ribosomes in a GTP-dependent manner. In Streptococcus equi subsp. equi (strain 4047), this protein is Elongation factor 4.